The primary structure comprises 121 residues: Neuropeptide-like protein 7 (121 aa).

A signal peptide spans M1–A22.

In terms of biological role, may regulate lifespan in response to food availability and oxidative stress. This is Neuropeptide-like protein 7 from Caenorhabditis elegans.